Reading from the N-terminus, the 1783-residue chain is Doublecortin domain-containing protein 1 (1783 aa).

A disordered region spans residues 93–133 (GLQDCSTHQTASDHSHDEISDLDSYKSNSKNNSCSISASKR). The span at 117–131 (YKSNSKNNSCSISAS) shows a compositional bias: low complexity. The region spanning 168–252 (KLQPRVIKVT…FLNPFKKIKD (85 aa)) is the Doublecortin 1 domain. One can recognise a Ricin B-type lectin 1 domain in the interval 702–800 (WLITKTGMIL…HIHHGAWTTA (99 aa)). Residues 860-880 (ASAQRWAIKHEGTSKPGQWKH) form a disordered region. Positions 925 to 1015 (PICKTTEPYA…ELWINPDLSI (91 aa)) constitute a Doublecortin 2 domain. The Ricin B-type lectin 2 domain occupies 1151-1266 (SCSPKHSKLH…GAANQKWHYM (116 aa)).

Interacts with dynein intermediate chain, tubulin, RAB8A, RAB3IP, NUDC, PAFAH1B1 and DCTN1.

The protein resides in the midbody. The protein localises to the midbody ring. Its subcellular location is the cytoplasm. It localises to the cytoskeleton. It is found in the spindle. In terms of biological role, microtubule-binding protein which plays an important role in mediating dynein-dependent transport of RAB8A-positive vesicles to the midbody during cytokinesis. This chain is Doublecortin domain-containing protein 1, found in Homo sapiens (Human).